A 187-amino-acid polypeptide reads, in one-letter code: MVKVWFMDDEQETDQRLEHHRSPPDYLELPELYQKTGVEYFKINADDYQNDAILGELRAKRGYTYDDEITCSEKCLPDYANKLKNFFTEHLHTDEEIRLVLDGSGYFDVRDNEEQWLRIQVVKGDLIIIPAGIYHRFTLDSNNFIKARRYFVGEPVWTPHNRPADDLDCRKSYLKHQAESFVQLNQV.

4 residues coordinate Fe(2+): H90, H92, E96, and H135. H90, H92, E96, and H135 together coordinate Ni(2+).

This sequence belongs to the acireductone dioxygenase (ARD) family. Requires Fe(2+) as cofactor. Ni(2+) is required as a cofactor.

Its subcellular location is the cytoplasm. It localises to the nucleus. The enzyme catalyses 1,2-dihydroxy-5-(methylsulfanyl)pent-1-en-3-one + O2 = 4-methylsulfanyl-2-oxobutanoate + formate + 2 H(+). It catalyses the reaction 1,2-dihydroxy-5-(methylsulfanyl)pent-1-en-3-one + O2 = 3-(methylsulfanyl)propanoate + CO + formate + 2 H(+). It functions in the pathway amino-acid biosynthesis; L-methionine biosynthesis via salvage pathway; L-methionine from S-methyl-5-thio-alpha-D-ribose 1-phosphate: step 5/6. Functionally, catalyzes 2 different reactions between oxygen and the acireductone 1,2-dihydroxy-3-keto-5-methylthiopentene (DHK-MTPene) depending upon the metal bound in the active site. Fe-containing acireductone dioxygenase (Fe-ARD) produces formate and 2-keto-4-methylthiobutyrate (KMTB), the alpha-ketoacid precursor of methionine in the methionine recycle pathway. Ni-containing acireductone dioxygenase (Ni-ARD) produces methylthiopropionate, carbon monoxide and formate, and does not lie on the methionine recycle pathway. In Drosophila pseudoobscura pseudoobscura (Fruit fly), this protein is Acireductone dioxygenase.